Consider the following 233-residue polypeptide: Demethylmenaquinone methyltransferase (233 aa).

S-adenosyl-L-methionine is bound by residues Thr-58, Asp-79, and 106–107 (NA).

This sequence belongs to the class I-like SAM-binding methyltransferase superfamily. MenG/UbiE family.

It carries out the reaction a 2-demethylmenaquinol + S-adenosyl-L-methionine = a menaquinol + S-adenosyl-L-homocysteine + H(+). It participates in quinol/quinone metabolism; menaquinone biosynthesis; menaquinol from 1,4-dihydroxy-2-naphthoate: step 2/2. Methyltransferase required for the conversion of demethylmenaquinol (DMKH2) to menaquinol (MKH2). This chain is Demethylmenaquinone methyltransferase, found in Bacillus subtilis (strain 168).